The sequence spans 528 residues: Putative ABC transporter ATP-binding protein MA_1418 (528 aa).

ABC transporter domains follow at residues 2 to 242 (IELR…TNLT) and 262 to 494 (ISVK…SDYK). Residues 36-43 (GHSAAGKT) and 294-301 (GENGSGKT) each bind ATP.

The protein belongs to the ABC transporter superfamily.

It is found in the cell membrane. In terms of biological role, probably part of an ABC transporter complex. Responsible for energy coupling to the transport system. This chain is Putative ABC transporter ATP-binding protein MA_1418, found in Methanosarcina acetivorans (strain ATCC 35395 / DSM 2834 / JCM 12185 / C2A).